Consider the following 192-residue polypeptide: Probable protein adenylyltransferase y4lH (192 aa).

The Fido domain occupies 52–190 (LDFAHYRALH…LAPLAAEIRR (139 aa)). ATP is bound by residues 82–83 (KG) and 139–141 (GNG).

Belongs to the fic family.

The catalysed reaction is L-tyrosyl-[protein] + ATP = O-(5'-adenylyl)-L-tyrosyl-[protein] + diphosphate. It carries out the reaction L-threonyl-[protein] + ATP = 3-O-(5'-adenylyl)-L-threonyl-[protein] + diphosphate. In terms of biological role, probable adenylyltransferase that mediates the addition of adenosine 5'-monophosphate (AMP) to specific residues of target proteins. The chain is Probable protein adenylyltransferase y4lH from Sinorhizobium fredii (strain NBRC 101917 / NGR234).